A 339-amino-acid chain; its full sequence is 3-isopropylmalate dehydrogenase (339 aa).

Residues R88, R98, R122, and D212 each coordinate substrate. 3 residues coordinate Mg(2+): D212, D236, and D240. 272 to 284 (GSAPDIAGQGIAD) serves as a coordination point for NAD(+).

The protein belongs to the isocitrate and isopropylmalate dehydrogenases family. LeuB type 2 subfamily. In terms of assembly, homodimer. It depends on Mg(2+) as a cofactor. The cofactor is Mn(2+).

It is found in the cytoplasm. The catalysed reaction is (2R,3S)-3-isopropylmalate + NAD(+) = 4-methyl-2-oxopentanoate + CO2 + NADH. It functions in the pathway amino-acid biosynthesis; L-leucine biosynthesis; L-leucine from 3-methyl-2-oxobutanoate: step 3/4. In terms of biological role, catalyzes the oxidation of 3-carboxy-2-hydroxy-4-methylpentanoate (3-isopropylmalate) to 3-carboxy-4-methyl-2-oxopentanoate. The product decarboxylates to 4-methyl-2 oxopentanoate. This is 3-isopropylmalate dehydrogenase from Corynebacterium diphtheriae (strain ATCC 700971 / NCTC 13129 / Biotype gravis).